Consider the following 258-residue polypeptide: Imidazole glycerol phosphate synthase subunit HisF (258 aa).

Residues Asp11 and Asp130 contribute to the active site.

This sequence belongs to the HisA/HisF family. As to quaternary structure, heterodimer of HisH and HisF.

It is found in the cytoplasm. It carries out the reaction 5-[(5-phospho-1-deoxy-D-ribulos-1-ylimino)methylamino]-1-(5-phospho-beta-D-ribosyl)imidazole-4-carboxamide + L-glutamine = D-erythro-1-(imidazol-4-yl)glycerol 3-phosphate + 5-amino-1-(5-phospho-beta-D-ribosyl)imidazole-4-carboxamide + L-glutamate + H(+). It functions in the pathway amino-acid biosynthesis; L-histidine biosynthesis; L-histidine from 5-phospho-alpha-D-ribose 1-diphosphate: step 5/9. IGPS catalyzes the conversion of PRFAR and glutamine to IGP, AICAR and glutamate. The HisF subunit catalyzes the cyclization activity that produces IGP and AICAR from PRFAR using the ammonia provided by the HisH subunit. The sequence is that of Imidazole glycerol phosphate synthase subunit HisF from Buchnera aphidicola subsp. Baizongia pistaciae (strain Bp).